The sequence spans 210 residues: Cytochrome c4 (210 aa).

A signal peptide spans 1 to 20; the sequence is MNKVLVSLLLTLGITGMAHA. Cys-34, Cys-37, His-38, Met-86, Cys-139, Cys-142, His-143, and Met-187 together coordinate heme c.

In terms of processing, binds 2 heme c groups covalently per subunit.

The protein localises to the periplasm. Its function is as follows. Diheme, high potential cytochrome c believed to be an intermediate electron donor to terminal oxidation systems. The chain is Cytochrome c4 (cc4) from Stutzerimonas stutzeri (Pseudomonas stutzeri).